Here is a 343-residue protein sequence, read N- to C-terminus: NADH-quinone oxidoreductase subunit H (343 aa).

The next 8 helical transmembrane spans lie at W21 to V41, F95 to F115, V124 to L144, M172 to V192, G197 to A217, I257 to E277, F281 to W301, and L317 to M337.

It belongs to the complex I subunit 1 family. NDH-1 is composed of 14 different subunits. Subunits NuoA, H, J, K, L, M, N constitute the membrane sector of the complex.

The protein localises to the cell inner membrane. It catalyses the reaction a quinone + NADH + 5 H(+)(in) = a quinol + NAD(+) + 4 H(+)(out). Its function is as follows. NDH-1 shuttles electrons from NADH, via FMN and iron-sulfur (Fe-S) centers, to quinones in the respiratory chain. The immediate electron acceptor for the enzyme in this species is believed to be ubiquinone. Couples the redox reaction to proton translocation (for every two electrons transferred, four hydrogen ions are translocated across the cytoplasmic membrane), and thus conserves the redox energy in a proton gradient. This subunit may bind ubiquinone. The protein is NADH-quinone oxidoreductase subunit H of Magnetococcus marinus (strain ATCC BAA-1437 / JCM 17883 / MC-1).